Consider the following 331-residue polypeptide: Malate dehydrogenase (331 aa).

Residue 14–20 participates in NAD(+) binding; that stretch reads GAAGSIG. Substrate contacts are provided by Arg95 and Arg101. NAD(+)-binding positions include Asn108, Gln115, and 132–134; that span reads VGN. 2 residues coordinate substrate: Asn134 and Arg165. Catalysis depends on His190, which acts as the Proton acceptor.

Belongs to the LDH/MDH superfamily. MDH type 2 family.

The catalysed reaction is (S)-malate + NAD(+) = oxaloacetate + NADH + H(+). In terms of biological role, catalyzes the reversible oxidation of malate to oxaloacetate. This chain is Malate dehydrogenase, found in Rhodococcus opacus (strain B4).